The chain runs to 488 residues: 3-octaprenyl-4-hydroxybenzoate carboxy-lyase (488 aa).

A Mn(2+)-binding site is contributed by Asn-172. Prenylated FMN-binding positions include 175–177 (IYR), 189–191 (RWL), and 194–195 (RG). Glu-238 is a binding site for Mn(2+). Residue Asp-287 is the Proton donor of the active site.

The protein belongs to the UbiD family. In terms of assembly, homohexamer. The cofactor is prenylated FMN. Mn(2+) serves as cofactor.

Its subcellular location is the cell membrane. It catalyses the reaction a 4-hydroxy-3-(all-trans-polyprenyl)benzoate + H(+) = a 2-(all-trans-polyprenyl)phenol + CO2. It functions in the pathway cofactor biosynthesis; ubiquinone biosynthesis. Catalyzes the decarboxylation of 3-octaprenyl-4-hydroxy benzoate to 2-octaprenylphenol, an intermediate step in ubiquinone biosynthesis. The chain is 3-octaprenyl-4-hydroxybenzoate carboxy-lyase from Azotobacter vinelandii (strain DJ / ATCC BAA-1303).